The following is a 102-amino-acid chain: UPF0328 protein ECU10_1820 (102 aa).

It belongs to the UPF0328 family.

The polypeptide is UPF0328 protein ECU10_1820 (Encephalitozoon cuniculi (strain GB-M1) (Microsporidian parasite)).